A 78-amino-acid polypeptide reads, in one-letter code: MSDIAERVKKIVIDHLGVDADKVVESASFIDDLGADSLDTVELVMAFEEEFGVEIPDDAADSILTVGDAVKFIEKAQA.

The 76-residue stretch at 2–77 (SDIAERVKKI…DAVKFIEKAQ (76 aa)) folds into the Carrier domain. An O-(pantetheine 4'-phosphoryl)serine modification is found at Ser37.

This sequence belongs to the acyl carrier protein (ACP) family. Post-translationally, 4'-phosphopantetheine is transferred from CoA to a specific serine of apo-ACP by AcpS. This modification is essential for activity because fatty acids are bound in thioester linkage to the sulfhydryl of the prosthetic group.

Its subcellular location is the cytoplasm. It functions in the pathway lipid metabolism; fatty acid biosynthesis. Its function is as follows. Carrier of the growing fatty acid chain in fatty acid biosynthesis. This chain is Acyl carrier protein, found in Rhizobium etli (strain CIAT 652).